The primary structure comprises 931 residues: MVSAPLLGWAAIRPIPVSRLKTCKYASNSLQSYNGIVASYLRLHYYRSLSSSAVLAEAIVHLEKTRNIGIIAHIDAGKTTTTERMLYYSGFTRRIGDVDDGSTVTDFLPAERARGITIQSAAITFHWPPLTGDGTSSSPSLEDLEAQNLPRSRASHTVNLIDTPGHADFTFEVLRSLRILDGAVCILDGVAGVEAQTEKVWHQASVYQIPRIVYVNKLDRDGAAFGRTVREVGSRLQGWPAVCQIPWFEGSNGRFTGIADVVSLQGLLWKEGGDGKSVKVFDLNGLENEDKSLAEELKRARVALVELLSEHDEDMVESFFEHEEDHLTVPSITILKSLRKCLLGPETQKIIPVFAGSSFRNMGVQPLLDAVNNLLPGPSESHDPEISLGSDKTSLGNLLSGELALQQDPKTASIEKSKQKKKAVVTRTSVDIKSLTANLESCALAFKVVSDAKRGVLVYVRVYSGSLNRNCHLYNTNLHVTERAPRLFKMYANDAVEVDSIPAGHIGVVVGLKYARTGDTLISCTGSKSVPPEPLNTLQLRPIDVPPPVFFASIEPHSLSEEKNMQEALALLLREDPSLHVTIDEDSGQTLLSGMGELHLEIARDRLVNDFKAKASMGRIEIGYRECVLDQSNPVTKIFDREVAGRKGKAGCTAVVEPYGQELESDGNDTSGSDDIIFTETVDGNKIIISAPGVNITTDKKGKEESTSLPPQLDLNSFRTSLYNGALSALARGPQFAFPMHNTKVTLTCNAAEHLFGSESSASALSAAARLATQGALRNLTTTAASTGTGMMEPVMNVIISVDEASLGAVVHDISSARGGHIVSLDEEMPISTSLSQSPESQDQPVAVDINKIYAPPDPFETPSVAGGLPIQAPANQPRTITAKVPLKEMVGYLKHLRSLSAGRGTFVMHVDRFERMSAQRQKAVLAELNR.

The 317-residue stretch at 63–379 (EKTRNIGIIA…AVNNLLPGPS (317 aa)) folds into the tr-type G domain. Residues 72-79 (AHIDAGKT), 162-166 (DTPGH), and 216-219 (NKLD) each bind GTP.

It belongs to the TRAFAC class translation factor GTPase superfamily. Classic translation factor GTPase family. EF-G/EF-2 subfamily.

It is found in the mitochondrion. Its function is as follows. Mitochondrial GTPase that mediates the disassembly of ribosomes from messenger RNA at the termination of mitochondrial protein biosynthesis. Not involved in the GTP-dependent ribosomal translocation step during translation elongation. The sequence is that of Ribosome-releasing factor 2, mitochondrial (mef2) from Talaromyces stipitatus (strain ATCC 10500 / CBS 375.48 / QM 6759 / NRRL 1006) (Penicillium stipitatum).